The chain runs to 509 residues: MYRSARSLHRFSASLSDLRAAQRSIKARNVCPAPGLRHQTVRMASSEAFRIERDTFGELKVPSDKYYGAQTVRSTMNFRIGGVTERMPIQVIRAFGILKKAAAEVNKDYGLDPKIADAIMKAADEVESGKLDDHFPLVVWQTGSGTQTNMNVNEVISNRAIEMLGGKLGSKDPVHPNDHVNKSQSSNDTFPTAMHIAAAKEVHEVLLPGLQTLHDALAAKAEQFKDIIKIGRTHTQDAVPLSLGQEFGGYVQQVKYSIARVKASLPRVYELAAGGTAVGTGLNTRIGFAEKVADKVSALTGLPFVTAANKFEALAAHDALVELSGALNTVAVSMMKIANDIRFLGSGPRSGLGELILPENEPGSSIMPGKVNPTQCEAMTMVAAQVMGNHVAVTVGGSNGHFELNVFKPMIIKNVLNSARLLGDASVSFTNNCVVGIEANTERINKLMSESLMLVTALNPHIGYDKAAKIAKTAHKDGSTLKEAALKLGFLNEQQFEEWVRPHDMLGPK.

The transit peptide at 1–43 (MYRSARSLHRFSASLSDLRAAQRSIKARNVCPAPGLRHQTVRM) directs the protein to the mitochondrion. Substrate is bound by residues 144 to 146 (SGT), 175 to 178 (HPND), 185 to 187 (SSN), and Thr-233. The Proton donor/acceptor role is filled by His-234. Residue Ser-364 is part of the active site. Substrate is bound by residues Ser-365 and 370–372 (KVN).

This sequence belongs to the class-II fumarase/aspartase family. Fumarase subfamily. In terms of assembly, homotetramer.

The protein localises to the mitochondrion. It localises to the cytoplasm. It is found in the cytosol. The protein resides in the nucleus. Its subcellular location is the chromosome. The enzyme catalyses (S)-malate = fumarate + H2O. Its pathway is carbohydrate metabolism; tricarboxylic acid cycle; (S)-malate from fumarate: step 1/1. Functionally, catalyzes the reversible stereospecific interconversion of fumarate to L-malate. Experiments in other species have demonstrated that specific isoforms of this protein act in defined pathways and favor one direction over the other. Its function is as follows. Catalyzes the hydration of fumarate to L-malate in the tricarboxylic acid (TCA) cycle to facilitate a transition step in the production of energy in the form of NADH. In terms of biological role, catalyzes the dehydration of L-malate to fumarate. Fumarate metabolism in the cytosol plays a role during urea cycle and arginine metabolism; fumarate being a by-product of the urea cycle and amino-acid catabolism. Also plays a role in DNA repair by promoting non-homologous end-joining (NHEJ). In response to DNA damage translocates to the nucleus and accumulates at DNA double-strand breaks (DSBs): acts by catalyzing formation of fumarate. This Danio rerio (Zebrafish) protein is Fumarate hydratase, mitochondrial.